Here is a 315-residue protein sequence, read N- to C-terminus: Ornithine carbamoyltransferase, anabolic (315 aa).

Residues 57 to 60 (STRT), glutamine 84, arginine 108, and 135 to 138 (HPCQ) each bind carbamoyl phosphate. Residues asparagine 166, aspartate 230, and 234–235 (SM) contribute to the L-ornithine site. Carbamoyl phosphate contacts are provided by residues 270–271 (CL) and arginine 298.

It belongs to the aspartate/ornithine carbamoyltransferase superfamily. OTCase family. Homododecamer (tetramer of trimers).

The protein localises to the cytoplasm. It carries out the reaction carbamoyl phosphate + L-ornithine = L-citrulline + phosphate + H(+). It participates in amino-acid biosynthesis; L-arginine biosynthesis; L-arginine from L-ornithine and carbamoyl phosphate: step 1/3. With respect to regulation, inhibited by the bisubstrate delta-N-phosphonoacetyl-L-ornithine (PALO). Its function is as follows. Reversibly catalyzes the transfer of the carbamoyl group from carbamoyl phosphate (CP) to the N(epsilon) atom of ornithine (ORN) to produce L-citrulline, which is a substrate for argininosuccinate synthetase, the enzyme involved in the final step in arginine biosynthesis. This chain is Ornithine carbamoyltransferase, anabolic, found in Pyrococcus furiosus (strain ATCC 43587 / DSM 3638 / JCM 8422 / Vc1).